The primary structure comprises 1205 residues: Chromosome partition protein Smc (1205 aa).

32 to 39 (PNGSGKSN) is a binding site for ATP. Coiled-coil stretches lie at residues 169–288 (KHRK…SIQH) and 330–499 (EELE…GLQR). The 115-residue stretch at 514-628 (GLFGSIAQLV…VNDLTEAMGL (115 aa)) folds into the SMC hinge domain. Coiled-coil stretches lie at residues 661–771 (LEVT…AQET), 802–836 (AVRT…RAQQ), and 979–1033 (DRVT…KDLL).

Belongs to the SMC family. As to quaternary structure, homodimer.

The protein resides in the cytoplasm. In terms of biological role, required for chromosome condensation and partitioning. The chain is Chromosome partition protein Smc from Mycobacterium tuberculosis (strain ATCC 25618 / H37Rv).